Here is a 188-residue protein sequence, read N- to C-terminus: Putative protein SSX9 (188 aa).

The region spanning 20-83 is the KRAB-related domain; it reads KIQKAFDDIA…TGATDLQGND (64 aa). The disordered stretch occupies residues 114–165; that stretch reads KKPAEVGNDSKEVPEASGLQNDGKQLCPPGKPTTSEKINKASGPKRGKHAWT. The segment covering 115 to 127 has biased composition (basic and acidic residues); that stretch reads KPAEVGNDSKEVP. Ser-123 carries the phosphoserine modification. The span at 156–165 shows a compositional bias: basic residues; the sequence is GPKRGKHAWT.

The protein belongs to the SSX family. Not detected in any normal or tumor tissues.

Its function is as follows. Could act as a modulator of transcription. This is Putative protein SSX9 from Homo sapiens (Human).